Consider the following 335-residue polypeptide: Mitochondrial amidoxime reducing component 2 (335 aa).

A mitochondrion-targeting transit peptide spans M1–L35. Residues K59, K138, and K144 each participate in a glycyl lysine isopeptide (Lys-Gly) (interchain with G-Cter in ubiquitin) cross-link. K156 is modified (N6-acetyllysine; alternate). K156 participates in a covalent cross-link: Glycyl lysine isopeptide (Lys-Gly) (interchain with G-Cter in ubiquitin); alternate. Glycyl lysine isopeptide (Lys-Gly) (interchain with G-Cter in ubiquitin) cross-links involve residues K166, K173, K187, K287, and K294. Residues G188–M334 enclose the MOSC domain.

Component of a complex composed of cytochrome b5, NADH-cytochrome b5 reductase (CYB5R3) and MTARC2. The cofactor is Mo-molybdopterin. Post-translationally, ubiquitinated by PRKN during mitophagy, leading to its degradation and enhancement of mitophagy. Deubiquitinated by USP30.

It is found in the mitochondrion outer membrane. Its subcellular location is the peroxisome. It catalyses the reaction N(omega)-hydroxy-L-arginine + 2 Fe(II)-[cytochrome b5] + 2 H(+) = L-arginine + 2 Fe(III)-[cytochrome b5] + H2O. Its function is as follows. Catalyzes the reduction of N-oxygenated molecules, acting as a counterpart of cytochrome P450 and flavin-containing monooxygenases in metabolic cycles. As a component of prodrug-converting system, reduces a multitude of N-hydroxylated prodrugs particularly amidoximes, leading to increased drug bioavailability. May be involved in mitochondrial N(omega)-hydroxy-L-arginine (NOHA) reduction, regulating endogenous nitric oxide levels and biosynthesis. Postulated to cleave the N-OH bond of N-hydroxylated substrates in concert with electron transfer from NADH to cytochrome b5 reductase then to cytochrome b5, the ultimate electron donor that primes the active site for substrate reduction. This Homo sapiens (Human) protein is Mitochondrial amidoxime reducing component 2.